The primary structure comprises 65 residues: Large ribosomal subunit protein bL35 (65 aa).

The span at Met-1–Arg-16 shows a compositional bias: basic residues. Residues Met-1–Gly-20 form a disordered region.

The protein belongs to the bacterial ribosomal protein bL35 family.

This Streptococcus equi subsp. equi (strain 4047) protein is Large ribosomal subunit protein bL35.